A 671-amino-acid chain; its full sequence is MAPKGKVYRGSVKDFPGFNASQDADALCNAMKGFGSDKDAILDLITSRSNKQRLEICQAYKSQYGKDLIADLKYELTGKFERLIVSLMRPPAYSDAKEIKDAIAGIGTDEKCLIEILASRTNQEIHDLVAAYKDAYERDLEADVVGDTSGHFKKMLVVLLQGAREEDDVVSEDLVEQDAKDLLEAGELKWGTDEAQFIYILGRRSKQHLRMVFDEYLKISGKPIERSIRAELSGDFEKLKLAVVKCVRSTAEYFAERLYKAMKGLGTRDNTLIHIMVSRSEIDMLDIREVFRTKYDKSLHNMIKEDTSGEYKKALLKLCEGDDDAAAEFFPEAAQVAYRMWELSAVAKVELRGTVQPASNFNDDGDAQVLRKAMKGLGTDEGAIIEVLTQRSNAQRQQILKAYKAHYGRDLLADLKSELSGSLANLILGLMLTPAQYDAKQLRKAVEGDGTDESTLVEIMATRNNQEIAAINEAYQQAYHKSLEDDLSSDTSVHFKRLLVSLALGNRDEGPENLTQAHEDAKVVAETLKLADVPSNDSSDSLETRFLSILCTRSYPHLRRVFQEFVKMTNHDVEHAIRKRMSGDVRDAFVAIVRSVKNKPAFFADKLYKSMKGAGTDERTLTRIMISRSEIDLLNIRGEFIDLFDKSLYQMIEKDSGDYCKALLALCGGDD.

Annexin repeat units follow at residues 18-89, 90-161, 173-245, 249-320, 361-432, 433-504, 519-594, and 598-669; these read FNAS…SLMR, PPAY…VLLQ, DLVE…AVVK, STAE…KLCE, FNDD…GLML, TPAQ…SLAL, EDAK…AIVR, and NKPA…LCGG.

It belongs to the annexin family.

It is found in the cytoplasm. The protein resides in the melanosome. Its function is as follows. May associate with CD21. May regulate the release of Ca(2+) from intracellular stores. The chain is Annexin A6 (ANXA6) from Gallus gallus (Chicken).